A 216-amino-acid polypeptide reads, in one-letter code: Octanoyltransferase (216 aa).

The BPL/LPL catalytic domain occupies A33–G216. Substrate is bound by residues R72–H79, A148–G150, and G162–S164. Residue C180 is the Acyl-thioester intermediate of the active site.

Belongs to the LipB family.

The protein localises to the cytoplasm. It carries out the reaction octanoyl-[ACP] + L-lysyl-[protein] = N(6)-octanoyl-L-lysyl-[protein] + holo-[ACP] + H(+). It functions in the pathway protein modification; protein lipoylation via endogenous pathway; protein N(6)-(lipoyl)lysine from octanoyl-[acyl-carrier-protein]: step 1/2. Catalyzes the transfer of endogenously produced octanoic acid from octanoyl-acyl-carrier-protein onto the lipoyl domains of lipoate-dependent enzymes. Lipoyl-ACP can also act as a substrate although octanoyl-ACP is likely to be the physiological substrate. The chain is Octanoyltransferase from Herminiimonas arsenicoxydans.